A 261-amino-acid polypeptide reads, in one-letter code: Putative quercetin 2,3-dioxygenase Ta0133 (261 aa).

4 residues coordinate a divalent metal cation: histidine 17, histidine 19, histidine 61, and glutamate 63.

This sequence belongs to the pirin family. It depends on a divalent metal cation as a cofactor.

The catalysed reaction is quercetin + O2 = 2-(3,4-dihydroxybenzoyloxy)-4,6-dihydroxybenzoate + CO. It participates in flavonoid metabolism; quercetin degradation. Functionally, putative quercetin 2,3-dioxygenase. This chain is Putative quercetin 2,3-dioxygenase Ta0133, found in Thermoplasma acidophilum (strain ATCC 25905 / DSM 1728 / JCM 9062 / NBRC 15155 / AMRC-C165).